A 173-amino-acid polypeptide reads, in one-letter code: 3-hydroxydecanoyl-[acyl-carrier-protein] dehydratase (173 aa).

Residue His71 is part of the active site.

This sequence belongs to the thioester dehydratase family. FabA subfamily. In terms of assembly, homodimer.

It localises to the cytoplasm. It carries out the reaction a (3R)-hydroxyacyl-[ACP] = a (2E)-enoyl-[ACP] + H2O. The catalysed reaction is (3R)-hydroxydecanoyl-[ACP] = (2E)-decenoyl-[ACP] + H2O. The enzyme catalyses (2E)-decenoyl-[ACP] = (3Z)-decenoyl-[ACP]. The protein operates within lipid metabolism; fatty acid biosynthesis. Necessary for the introduction of cis unsaturation into fatty acids. Catalyzes the dehydration of (3R)-3-hydroxydecanoyl-ACP to E-(2)-decenoyl-ACP and then its isomerization to Z-(3)-decenoyl-ACP. Can catalyze the dehydratase reaction for beta-hydroxyacyl-ACPs with saturated chain lengths up to 16:0, being most active on intermediate chain length. This chain is 3-hydroxydecanoyl-[acyl-carrier-protein] dehydratase, found in Bradyrhizobium diazoefficiens (strain JCM 10833 / BCRC 13528 / IAM 13628 / NBRC 14792 / USDA 110).